A 53-amino-acid chain; its full sequence is ATP synthase protein 8 (53 aa).

The helical transmembrane segment at 4 to 24 (MAPISWLLLFIIFSITFILFC) threads the bilayer.

It belongs to the ATPase protein 8 family. In terms of assembly, F-type ATPases have 2 components, CF(1) - the catalytic core - and CF(0) - the membrane proton channel.

The protein resides in the mitochondrion membrane. Its function is as follows. Mitochondrial membrane ATP synthase (F(1)F(0) ATP synthase or Complex V) produces ATP from ADP in the presence of a proton gradient across the membrane which is generated by electron transport complexes of the respiratory chain. F-type ATPases consist of two structural domains, F(1) - containing the extramembraneous catalytic core and F(0) - containing the membrane proton channel, linked together by a central stalk and a peripheral stalk. During catalysis, ATP synthesis in the catalytic domain of F(1) is coupled via a rotary mechanism of the central stalk subunits to proton translocation. Part of the complex F(0) domain. Minor subunit located with subunit a in the membrane. This is ATP synthase protein 8 (mt:ATPase8) from Drosophila mauritiana (Fruit fly).